We begin with the raw amino-acid sequence, 1107 residues long: Dynein axonemal assembly factor 1 homolog (1107 aa).

LRR repeat units follow at residues H34–V56, G57–T78, E79–K100, Q101–I122, V125–R146, and F150–G171. Residues N184–W223 form the LRRCT domain. Disordered regions lie at residues H258–K281, N428–V487, E500–E608, K780–Q810, S834–D855, and A1070–D1107. The segment covering N428–F437 has biased composition (polar residues). Over residues E446 to I459 the composition is skewed to acidic residues. A compositionally biased stretch (basic and acidic residues) spans E500–S512. Residues D531–D544 are compositionally biased toward acidic residues. Low complexity predominate over residues S549–S560. Over residues N581 to S597 the composition is skewed to polar residues. Positions L801–Q810 are enriched in basic and acidic residues. The segment covering D844–D855 has biased composition (acidic residues). Residues V1083 to T1097 show a composition bias toward basic and acidic residues. Positions V1098–D1107 are enriched in acidic residues.

The protein belongs to the DNAAF1 family.

Its subcellular location is the cell projection. The protein resides in the cilium. Functionally, cilium-specific protein required for cilia structures. This Aedes aegypti (Yellowfever mosquito) protein is Dynein axonemal assembly factor 1 homolog.